The sequence spans 409 residues: Tyrosine--tRNA ligase (409 aa).

Tyrosine 35 is an L-tyrosine binding site. The short motif at 40-49 (PTGSSLHVGH) is the 'HIGH' region element. L-tyrosine-binding residues include tyrosine 168 and glutamine 172. The 'KMSKS' region motif lies at 228-232 (KMGKT). ATP is bound at residue lysine 231. Residues 339-404 (IKVTDLFVQV…AGKKRVVRIV (66 aa)) form the S4 RNA-binding domain.

Belongs to the class-I aminoacyl-tRNA synthetase family. TyrS type 1 subfamily. In terms of assembly, homodimer.

Its subcellular location is the cytoplasm. It carries out the reaction tRNA(Tyr) + L-tyrosine + ATP = L-tyrosyl-tRNA(Tyr) + AMP + diphosphate + H(+). In terms of biological role, catalyzes the attachment of tyrosine to tRNA(Tyr) in a two-step reaction: tyrosine is first activated by ATP to form Tyr-AMP and then transferred to the acceptor end of tRNA(Tyr). The sequence is that of Tyrosine--tRNA ligase from Treponema pallidum (strain Nichols).